Reading from the N-terminus, the 850-residue chain is Mitochondrial escape protein 2 (850 aa).

The transit peptide at Met1–His44 directs the protein to the mitochondrion. Residues His44 to Gly66 form a disordered region. Over Val45–Arg287 the chain is Mitochondrial matrix. A compositionally biased stretch (polar residues) spans Ser47–Asp64. The RRM domain maps to Thr198–Ile272. Residues Ile288 to Ile308 traverse the membrane as a helical segment. Topologically, residues Arg309–Lys850 are mitochondrial intermembrane. Over residues Lys607–Ala621 the composition is skewed to basic and acidic residues. Residues Lys607 to Ser633 form a disordered region.

Belongs to the YME2 family.

It is found in the mitochondrion inner membrane. Functionally, plays a role in maintaining the mitochondrial genome and in controlling the mtDNA escape. Involved in the regulation of mtDNA nucleotide structure and number. May have a dispensable role in early maturation of pre-rRNA. The chain is Mitochondrial escape protein 2 (YME2) from Saccharomyces cerevisiae (strain YJM789) (Baker's yeast).